The chain runs to 348 residues: Holliday junction branch migration complex subunit RuvB (348 aa).

Residues 4 to 186 (TDRIISANTA…FGIIQRLEFY (183 aa)) are large ATPase domain (RuvB-L). Residues I25, R26, G67, K70, T71, T72, 133–135 (EDY), R176, Y186, and R223 contribute to the ATP site. T71 is a binding site for Mg(2+). The segment at 187-257 (SIDDLSKIVY…IADKALSMLK (71 aa)) is small ATPAse domain (RuvB-S). The tract at residues 260–348 (PVGFDHMDHR…SADQQQTLSI (89 aa)) is head domain (RuvB-H). Positions 315 and 320 each coordinate DNA.

The protein belongs to the RuvB family. Homohexamer. Forms an RuvA(8)-RuvB(12)-Holliday junction (HJ) complex. HJ DNA is sandwiched between 2 RuvA tetramers; dsDNA enters through RuvA and exits via RuvB. An RuvB hexamer assembles on each DNA strand where it exits the tetramer. Each RuvB hexamer is contacted by two RuvA subunits (via domain III) on 2 adjacent RuvB subunits; this complex drives branch migration. In the full resolvosome a probable DNA-RuvA(4)-RuvB(12)-RuvC(2) complex forms which resolves the HJ.

It is found in the cytoplasm. The catalysed reaction is ATP + H2O = ADP + phosphate + H(+). In terms of biological role, the RuvA-RuvB-RuvC complex processes Holliday junction (HJ) DNA during genetic recombination and DNA repair, while the RuvA-RuvB complex plays an important role in the rescue of blocked DNA replication forks via replication fork reversal (RFR). RuvA specifically binds to HJ cruciform DNA, conferring on it an open structure. The RuvB hexamer acts as an ATP-dependent pump, pulling dsDNA into and through the RuvAB complex. RuvB forms 2 homohexamers on either side of HJ DNA bound by 1 or 2 RuvA tetramers; 4 subunits per hexamer contact DNA at a time. Coordinated motions by a converter formed by DNA-disengaged RuvB subunits stimulates ATP hydrolysis and nucleotide exchange. Immobilization of the converter enables RuvB to convert the ATP-contained energy into a lever motion, pulling 2 nucleotides of DNA out of the RuvA tetramer per ATP hydrolyzed, thus driving DNA branch migration. The RuvB motors rotate together with the DNA substrate, which together with the progressing nucleotide cycle form the mechanistic basis for DNA recombination by continuous HJ branch migration. Branch migration allows RuvC to scan DNA until it finds its consensus sequence, where it cleaves and resolves cruciform DNA. The chain is Holliday junction branch migration complex subunit RuvB from Francisella tularensis subsp. tularensis (strain FSC 198).